A 339-amino-acid polypeptide reads, in one-letter code: Small ribosomal subunit biogenesis GTPase RsgA (339 aa).

The region spanning 111–271 is the CP-type G domain; the sequence is MRGLLKPVAA…LIDSPGIREF (161 aa). GTP is bound by residues 159–162 and 213–221; these read NKAD and GQSGVGKSS. Residues Cys-295, Cys-300, His-302, and Cys-308 each contribute to the Zn(2+) site.

Belongs to the TRAFAC class YlqF/YawG GTPase family. RsgA subfamily. In terms of assembly, monomer. Associates with 30S ribosomal subunit, binds 16S rRNA. The cofactor is Zn(2+).

Its subcellular location is the cytoplasm. Functionally, one of several proteins that assist in the late maturation steps of the functional core of the 30S ribosomal subunit. Helps release RbfA from mature subunits. May play a role in the assembly of ribosomal proteins into the subunit. Circularly permuted GTPase that catalyzes slow GTP hydrolysis, GTPase activity is stimulated by the 30S ribosomal subunit. The chain is Small ribosomal subunit biogenesis GTPase RsgA from Pseudomonas aeruginosa (strain UCBPP-PA14).